A 65-amino-acid polypeptide reads, in one-letter code: Metallothionein-like protein 3B (65 aa).

It belongs to the metallothionein superfamily. Type 15 family. As to expression, expressed in leaves and rachis.

In terms of biological role, metallothioneins have a high content of cysteine residues that bind various heavy metals. In Oryza sativa subsp. japonica (Rice), this protein is Metallothionein-like protein 3B (MT3B).